A 410-amino-acid chain; its full sequence is Cysteine desulfurase IscS (410 aa).

Pyridoxal 5'-phosphate contacts are provided by residues 80–81 (AT), N160, Q188, and 208–210 (SGH). K211 carries the post-translational modification N6-(pyridoxal phosphate)lysine. A pyridoxal 5'-phosphate-binding site is contributed by T248. The Cysteine persulfide intermediate role is filled by C334. [2Fe-2S] cluster is bound at residue C334.

The protein belongs to the class-V pyridoxal-phosphate-dependent aminotransferase family. NifS/IscS subfamily. As to quaternary structure, homodimer. Forms a heterotetramer with IscU, interacts with other sulfur acceptors. Requires pyridoxal 5'-phosphate as cofactor.

The protein localises to the cytoplasm. It carries out the reaction (sulfur carrier)-H + L-cysteine = (sulfur carrier)-SH + L-alanine. Its pathway is cofactor biosynthesis; iron-sulfur cluster biosynthesis. Functionally, master enzyme that delivers sulfur to a number of partners involved in Fe-S cluster assembly, tRNA modification or cofactor biosynthesis. Catalyzes the removal of elemental sulfur atoms from cysteine to produce alanine. Functions as a sulfur delivery protein for Fe-S cluster synthesis onto IscU, an Fe-S scaffold assembly protein, as well as other S acceptor proteins. The chain is Cysteine desulfurase IscS from Rickettsia peacockii (strain Rustic).